The primary structure comprises 330 residues: RNA/RNP complex-1-interacting phosphatase (330 aa).

The span at 1–12 (MSQWHHPRSGWG) shows a compositional bias: basic residues. The segment at 1–32 (MSQWHHPRSGWGRRRDFSGRSSAKKKGGNHIP) is disordered. The Tyrosine-protein phosphatase domain occupies 61 to 208 (FEKKLAPEEC…LQNGPIRKNW (148 aa)). C152 serves as the catalytic Phosphocysteine intermediate. Position 153 to 158 (153 to 158 (THGLNR)) interacts with substrate. The Proton donor/acceptor role is filled by R158.

The protein belongs to the protein-tyrosine phosphatase family. Non-receptor class dual specificity subfamily. In terms of assembly, monomer. May interact with SFRS7 and SFRS9/SRP30C.

It is found in the nucleus. Its subcellular location is the nucleus speckle. Possesses RNA 5'-triphosphatase and diphosphatase activities, but displays a poor protein-tyrosine phosphatase activity. In addition, has phosphatase activity with ATP, ADP and O-methylfluorescein phosphate (in vitro). Binds to RNA. May participate in nuclear mRNA metabolism. The protein is RNA/RNP complex-1-interacting phosphatase of Homo sapiens (Human).